A 190-amino-acid chain; its full sequence is FMRFamide-related peptides (190 aa).

The first 21 residues, 1-21, serve as a signal peptide directing secretion; that stretch reads MSCSRTVALLAALWLVVGATS. Residues 22–33 constitute a propeptide that is removed on maturation; the sequence is SPVRRSPDLEAR. Phenylalanine amide is present on phenylalanine 45. Residues 69–104 constitute a propeptide that is removed on maturation; that stretch reads GNSFLRFGRSQPLTLSTDDLVSLLRAYEEDYDTPMT. Phenylalanine 113 bears the Phenylalanine amide mark. The propeptide occupies 116–150; the sequence is DPNFIRLGRSADDDKSAFEQNSELVVSGYPQRKSR. Position 158 is a leucine amide (leucine 158). A propeptide spanning residues 160–190 is cleaved from the precursor; the sequence is RDSEEVNENEFEETEESRRKRSADSCHDCQS. Residues 161–190 are disordered; the sequence is DSEEVNENEFEETEESRRKRSADSCHDCQS. A compositionally biased stretch (acidic residues) spans 164-174; sequence EVNENEFEETE. The span at 175–190 shows a compositional bias: basic and acidic residues; it reads ESRRKRSADSCHDCQS.

Belongs to the FARP (FMRFamide related peptide) family. RFamide 1: Expressed in corpora cardiaca (CC), corpora allata (CA), antennal lobe (AL) and gnathal ganglion (GNG) (at protein level). Expression in AL detected in most animals, in CC, CA and in GNG in some animals (at protein level). RFamide precursor-related peptide 2: Expressed in corpora cardiaca (CC), corpora allata (CA), antennal lobe (AL) and gnathal ganglion (GNG) (at protein level). Expression in AL detected in some animals, expression in CC, CA and GNG in few animals (at protein level). RFamide 3: Expressed in corpora cardiaca (CC), corpora allata (CA), antennal lobe (AL) and gnathal ganglion (GNG) (at protein level). Expression in AL detected in all animals, in CC, CA and GNG in most animals (at protein level). RFamide 5: Expressed in corpora cardiaca (CC), corpora allata (CA), antennal lobe (AL) and gnathal ganglion (GNG) (at protein level). Expression in AL detected in all animals, in CC, CA and in GNG in some animals (at protein level).

It is found in the secreted. In terms of biological role, in insects, FMRFamide and related peptides have modulatory actions at skeletal neuromuscular junctions, and peptides that are immunologically related to FMRFamide are released into the circulation from neurohemal organs. This chain is FMRFamide-related peptides, found in Agrotis ipsilon (Black cutworm moth).